The following is a 123-amino-acid chain: Large ribosomal subunit protein bL20 (123 aa).

A compositionally biased stretch (basic residues) spans 1–15 (MARVKRSVNAKKKRR). A disordered region spans residues 1–23 (MARVKRSVNAKKKRREVLDQASG).

This sequence belongs to the bacterial ribosomal protein bL20 family.

Its function is as follows. Binds directly to 23S ribosomal RNA and is necessary for the in vitro assembly process of the 50S ribosomal subunit. It is not involved in the protein synthesizing functions of that subunit. In Cutibacterium acnes (strain DSM 16379 / KPA171202) (Propionibacterium acnes), this protein is Large ribosomal subunit protein bL20.